The following is a 202-amino-acid chain: Dephospho-CoA kinase (202 aa).

The DPCK domain maps to 3–200; that stretch reads TIGLTGGIGS…QRYLTLAANR (198 aa). 11–16 lines the ATP pocket; the sequence is GSGKSA.

The protein belongs to the CoaE family.

The protein localises to the cytoplasm. The catalysed reaction is 3'-dephospho-CoA + ATP = ADP + CoA + H(+). It participates in cofactor biosynthesis; coenzyme A biosynthesis; CoA from (R)-pantothenate: step 5/5. Functionally, catalyzes the phosphorylation of the 3'-hydroxyl group of dephosphocoenzyme A to form coenzyme A. The protein is Dephospho-CoA kinase of Thiobacillus denitrificans (strain ATCC 25259 / T1).